The sequence spans 122 residues: Large ribosomal subunit protein uL14 (122 aa).

This sequence belongs to the universal ribosomal protein uL14 family. As to quaternary structure, part of the 50S ribosomal subunit. Forms a cluster with proteins L3 and L19. In the 70S ribosome, L14 and L19 interact and together make contacts with the 16S rRNA in bridges B5 and B8.

In terms of biological role, binds to 23S rRNA. Forms part of two intersubunit bridges in the 70S ribosome. The sequence is that of Large ribosomal subunit protein uL14 from Bifidobacterium adolescentis (strain ATCC 15703 / DSM 20083 / NCTC 11814 / E194a).